Consider the following 237-residue polypeptide: Casparian strip membrane protein 2 (237 aa).

Residues 1–48 form a disordered region; it reads MSGSDTSGSVHVDEHGHGHGKASSSYDGAGAPAPAPAPFQGHRKAGSG. Residues 1–69 lie on the Cytoplasmic side of the membrane; the sequence is MSGSDTSGSV…GSGGDGLRRC (69 aa). Residues 70-90 form a helical membrane-spanning segment; sequence LGLIDFVLRVAAFGPTLAAAI. The Extracellular portion of the chain corresponds to 91 to 117; it reads SIGTSDERLSVFTNYFQFRARFDDFPA. Residues 118-138 traverse the membrane as a helical segment; the sequence is FEFFIVANAIAAGYMVLSLPF. Topologically, residues 139-152 are cytoplasmic; it reads SAATIMSSKATGVK. Residues 153–173 form a helical membrane-spanning segment; sequence LLLLICDTIMVGLLTAAASAA. Residues 174–205 are Extracellular-facing; it reads AAMVYVAHEGNLRANWVPICLQFHGFCQRTSG. The chain crosses the membrane as a helical span at residues 206 to 226; it reads AVIASFLAVFVLMVLIVMAAF. Residues 227 to 237 are Cytoplasmic-facing; it reads TMPRRTHHTAS.

Belongs to the Casparian strip membrane proteins (CASP) family. As to quaternary structure, homodimer and heterodimers.

Its subcellular location is the cell membrane. Functionally, regulates membrane-cell wall junctions and localized cell wall deposition. Required for establishment of the Casparian strip membrane domain (CSD) and the subsequent formation of Casparian strips, a cell wall modification of the root endodermis that determines an apoplastic barrier between the intraorganismal apoplasm and the extraorganismal apoplasm and prevents lateral diffusion. The protein is Casparian strip membrane protein 2 of Oryza sativa subsp. japonica (Rice).